The chain runs to 334 residues: B3 domain-containing protein LOC_Os12g40090 (334 aa).

The segment at residues 5–102 (RIRFFRLMTG…SFDVLIFDAS (98 aa)) is a DNA-binding region (TF-B3 1). The segment at 142–178 (TSTPSVLIGSPHKASTSKKLSGKTKTNPRKEPEDPNC) is disordered. Over residues 154-166 (KASTSKKLSGKTK) the composition is skewed to low complexity. A DNA-binding region (TF-B3 2) is located at residues 227-326 (FVVVLQTAHV…TMTVHVIGKA (100 aa)).

Its subcellular location is the nucleus. This chain is B3 domain-containing protein LOC_Os12g40090, found in Oryza sativa subsp. japonica (Rice).